Consider the following 91-residue polypeptide: MLLQRIGIEHLRIWILLLLISLVPAALIRDRRRTSDDFSLFSYDYDDKADAHDADAAFRKFEALCSARSQQPSTSKPSLIDALCTSALKKE.

The signal sequence occupies residues 1–25 (MLLQRIGIEHLRIWILLLLISLVPA).

This is an uncharacterized protein from Caenorhabditis elegans.